Reading from the N-terminus, the 296-residue chain is Nucleotide-binding protein SZO_12220 (296 aa).

13-20 (GMSGAGKT) is an ATP binding site. 63–66 (DMRS) is a GTP binding site.

The protein belongs to the RapZ-like family.

In terms of biological role, displays ATPase and GTPase activities. This is Nucleotide-binding protein SZO_12220 from Streptococcus equi subsp. zooepidemicus (strain H70).